The primary structure comprises 318 residues: D-alanine--D-alanine ligase (318 aa).

The ATP-grasp domain maps to 101 to 307 (KKIIQYEGLP…FPDLIEKLVE (207 aa)). ATP is bound at residue 135 to 190 (CREMGLPLVVKAPTQGSTIGMSFVHKEEDMAGALELAYDYDPVALVEQFIRGTEVT). 3 residues coordinate Mg(2+): D261, E274, and N276.

This sequence belongs to the D-alanine--D-alanine ligase family. Mg(2+) serves as cofactor. It depends on Mn(2+) as a cofactor.

The protein localises to the cytoplasm. The enzyme catalyses 2 D-alanine + ATP = D-alanyl-D-alanine + ADP + phosphate + H(+). It participates in cell wall biogenesis; peptidoglycan biosynthesis. Cell wall formation. This is D-alanine--D-alanine ligase from Pelotomaculum thermopropionicum (strain DSM 13744 / JCM 10971 / SI).